A 438-amino-acid polypeptide reads, in one-letter code: Plasmalemma vesicle-associated protein (438 aa).

Residues 1-26 (MGLSMDRSPYARTGDQQRGCWYYLRY) are Cytoplasmic-facing. Residues 27 to 47 (FFLFVSLIQFLIILGLVLFMI) form a helical; Signal-anchor for type II membrane protein membrane-spanning segment. Residues 48-438 (YGNVHATTES…VVNPAAQPSG (391 aa)) lie on the Extracellular side of the membrane. N82, N88, N112, and N150 each carry an N-linked (GlcNAc...) asparagine glycan. Coiled-coil stretches lie at residues 140 to 160 (KQCQEQLKEVNKTCEALLFKL), 189 to 224 (KRQTEEQLEACGKARERQQQEQQVTEENLRKVQSLC), and 281 to 383 (EELA…ISAL). A disordered region spans residues 391–413 (SLPAVPPRVSGPPPNPPPIDPAS). The segment covering 394–410 (AVPPRVSGPPPNPPPID) has biased composition (pro residues).

In terms of assembly, homodimer. As to expression, expressed in lung, kidney, spleen, heart, muscle, eye, pancreas, thyroid, thymus, submaxillary gland, prostate, epididymis, uterus and liver.

The protein resides in the cell membrane. Its subcellular location is the membrane. The protein localises to the caveola. It is found in the cytoplasm. It localises to the perinuclear region. Its function is as follows. Endothelial cell-specific membrane protein involved in the formation of the diaphragms that bridge endothelial fenestrae. It is also required for the formation of stomata of caveolae and transendothelial channels. Functions in microvascular permeability, endothelial fenestrae contributing to the passage of water and solutes and regulating transcellular versus paracellular flow in different organs. Plays a specific role in embryonic development. The polypeptide is Plasmalemma vesicle-associated protein (Plvap) (Mus musculus (Mouse)).